Here is a 318-residue protein sequence, read N- to C-terminus: C1GALT1-specific chaperone 1 (318 aa).

Residues Met-1–Ser-6 lie on the Cytoplasmic side of the membrane. The chain crosses the membrane as a helical; Signal-anchor for type II membrane protein span at residues Ser-7 to Gly-26. The Lumenal portion of the chain corresponds to His-27–Asp-318.

The protein belongs to the glycosyltransferase 31 family. Beta3-Gal-T subfamily. In terms of assembly, associates with core 1 beta-3-galactosyltransferase (C1GALT1), probably not with the soluble active form.

It is found in the membrane. Probable chaperone required for the generation of 1 O-glycan Gal-beta1-3GalNAc-alpha1-Ser/Thr (T antigen), which is a precursor for many extended O-glycans in glycoproteins. Probably acts as a specific molecular chaperone assisting the folding/stability of core 1 beta-3-galactosyltransferase (C1GALT1). The protein is C1GALT1-specific chaperone 1 (C1GALT1C1) of Bos taurus (Bovine).